We begin with the raw amino-acid sequence, 353 residues long: 3'(2'),5'-bisphosphate nucleotidase 1 (353 aa).

The active-site Proton acceptor is D46. The Mg(2+) site is built by E71, D134, I136, and D137. T139 serves as the catalytic Proton acceptor. Adenosine 3',5'-bisphosphate-binding residues include T139, H235, S259, K262, R276, and D288. The AMP site is built by H235, S259, K262, R276, and D288. D288 contacts Mg(2+).

It belongs to the inositol monophosphatase superfamily. Mg(2+) is required as a cofactor. Expressed in roots, leaves, stems, flowers and siliques.

It carries out the reaction 3'-phosphoadenylyl sulfate + H2O = adenosine 5'-phosphosulfate + phosphate. The catalysed reaction is adenosine 3',5'-bisphosphate + H2O = AMP + phosphate. It catalyses the reaction adenosine 2',5'-bisphosphate + H2O = AMP + phosphate. The enzyme catalyses 1D-myo-inositol 1,4-bisphosphate + H2O = 1D-myo-inositol 4-phosphate + phosphate. It carries out the reaction 1D-myo-inositol 1,3,4-trisphosphate + H2O = 1D-myo-inositol 3,4-bisphosphate + phosphate. Its pathway is signal transduction; phosphatidylinositol signaling pathway. With respect to regulation, inhibited non-competitively by Li(+) (IC(50)=0.20 mM) and Na(+) (IC(50)=200 mM). Phosphatase that converts adenosine 3'-phosphate 5'-phosphosulfate (PAPS) to adenosine 5'-phosphosulfate (APS) and 3'(2')-phosphoadenosine 5'-phosphate (PAP) to AMP. May regulate the flux of sulfur in the sulfur-activation pathway by converting PAPS to APS. May play a role in the biosynthesis of sulfate conjugates and RNA processing. Is also able to hydrolyze inositol 1,4-bisphosphate and inositol 1,3,4-trisphosphate. Could be considered as a negative regulator of abscisic acid (ABA)- and stress-responsive genes, through modulating the inositol 1,4,5-trisphosphate (IP3) turnover. Is also involved in salt tolerance. Acts as a suppressor of virus- and transgene-induced silencing. The polypeptide is 3'(2'),5'-bisphosphate nucleotidase 1 (Arabidopsis thaliana (Mouse-ear cress)).